Reading from the N-terminus, the 279-residue chain is Zinc finger CCCH domain-containing protein 1 (279 aa).

A disordered region spans residues 20–45; sequence DVIVLSPGPPARRRPPPVKAVEPESG. 2 consecutive C3H1-type zinc fingers follow at residues 56 to 84 and 139 to 167; these read FYKT…HGDE and RAIT…HVSA.

The sequence is that of Zinc finger CCCH domain-containing protein 1 from Oryza sativa subsp. japonica (Rice).